Consider the following 164-residue polypeptide: Phosphopantetheine adenylyltransferase (164 aa).

Ser10 provides a ligand contact to substrate. ATP is bound by residues 10-11 (SF) and His18. Substrate-binding residues include Lys42, Leu74, and Arg88. Residues 89–91 (GLR), Glu99, and 124–130 (YAFLSSS) contribute to the ATP site.

Belongs to the bacterial CoaD family. As to quaternary structure, homohexamer. It depends on Mg(2+) as a cofactor.

Its subcellular location is the cytoplasm. It carries out the reaction (R)-4'-phosphopantetheine + ATP + H(+) = 3'-dephospho-CoA + diphosphate. It participates in cofactor biosynthesis; coenzyme A biosynthesis; CoA from (R)-pantothenate: step 4/5. Functionally, reversibly transfers an adenylyl group from ATP to 4'-phosphopantetheine, yielding dephospho-CoA (dPCoA) and pyrophosphate. The chain is Phosphopantetheine adenylyltransferase from Geobacillus thermodenitrificans (strain NG80-2).